A 217-amino-acid chain; its full sequence is Ribonuclease HII (217 aa).

Positions 27-216 constitute an RNase H type-2 domain; the sequence is SRVAGVDEAG…VKESIQEGVC (190 aa). Residues D33, E34, and D126 each contribute to the a divalent metal cation site.

Belongs to the RNase HII family. It depends on Mn(2+) as a cofactor. Mg(2+) is required as a cofactor.

The protein localises to the cytoplasm. It catalyses the reaction Endonucleolytic cleavage to 5'-phosphomonoester.. Functionally, endonuclease that specifically degrades the RNA of RNA-DNA hybrids. This Chlamydia trachomatis serovar A (strain ATCC VR-571B / DSM 19440 / HAR-13) protein is Ribonuclease HII.